We begin with the raw amino-acid sequence, 92 residues long: Putative transmembrane protein ORF92 (92 aa).

Helical transmembrane passes span 11–28 (FVKG…TYAI), 32–52 (FFSS…LFAS), and 54–74 (FLFD…IGVG).

It localises to the host membrane. This Acidianus convivator (ABV) protein is Putative transmembrane protein ORF92.